The sequence spans 403 residues: S-adenosylmethionine synthase (403 aa).

His-15 serves as a coordination point for ATP. Asp-17 is a Mg(2+) binding site. Residue Glu-43 participates in K(+) binding. Residues Glu-56 and Gln-99 each coordinate L-methionine. The tract at residues 99–109 is flexible loop; the sequence is QSPDINQGVDR. ATP contacts are provided by residues 166–168, 232–233, Asp-241, 247–248, Ala-264, and Lys-268; these read DAK, KF, and RK. L-methionine is bound at residue Asp-241. Lys-272 contacts L-methionine.

The protein belongs to the AdoMet synthase family. Homotetramer; dimer of dimers. Requires Mg(2+) as cofactor. K(+) is required as a cofactor.

It is found in the cytoplasm. It carries out the reaction L-methionine + ATP + H2O = S-adenosyl-L-methionine + phosphate + diphosphate. The protein operates within amino-acid biosynthesis; S-adenosyl-L-methionine biosynthesis; S-adenosyl-L-methionine from L-methionine: step 1/1. Its function is as follows. Catalyzes the formation of S-adenosylmethionine (AdoMet) from methionine and ATP. The overall synthetic reaction is composed of two sequential steps, AdoMet formation and the subsequent tripolyphosphate hydrolysis which occurs prior to release of AdoMet from the enzyme. In Xanthomonas campestris pv. campestris (strain ATCC 33913 / DSM 3586 / NCPPB 528 / LMG 568 / P 25), this protein is S-adenosylmethionine synthase.